Consider the following 166-residue polypeptide: Phosphopantetheine adenylyltransferase (166 aa).

Position 9 (Thr-9) interacts with substrate. Residues 9-10 (TF) and His-17 contribute to the ATP site. Substrate-binding residues include Lys-41, Leu-78, and Arg-92. ATP-binding positions include 93 to 95 (GLR), Glu-103, and 128 to 134 (HQAIASK).

Belongs to the bacterial CoaD family. In terms of assembly, homohexamer. It depends on Mg(2+) as a cofactor.

Its subcellular location is the cytoplasm. It carries out the reaction (R)-4'-phosphopantetheine + ATP + H(+) = 3'-dephospho-CoA + diphosphate. It participates in cofactor biosynthesis; coenzyme A biosynthesis; CoA from (R)-pantothenate: step 4/5. In terms of biological role, reversibly transfers an adenylyl group from ATP to 4'-phosphopantetheine, yielding dephospho-CoA (dPCoA) and pyrophosphate. The polypeptide is Phosphopantetheine adenylyltransferase (Roseobacter denitrificans (strain ATCC 33942 / OCh 114) (Erythrobacter sp. (strain OCh 114))).